Reading from the N-terminus, the 456-residue chain is Exodeoxyribonuclease 7 large subunit (456 aa).

It belongs to the XseA family. As to quaternary structure, heterooligomer composed of large and small subunits.

The protein resides in the cytoplasm. It catalyses the reaction Exonucleolytic cleavage in either 5'- to 3'- or 3'- to 5'-direction to yield nucleoside 5'-phosphates.. Functionally, bidirectionally degrades single-stranded DNA into large acid-insoluble oligonucleotides, which are then degraded further into small acid-soluble oligonucleotides. The sequence is that of Exodeoxyribonuclease 7 large subunit from Azotobacter vinelandii (strain DJ / ATCC BAA-1303).